We begin with the raw amino-acid sequence, 244 residues long: Ureidoacrylate amidohydrolase RutB (244 aa).

The active-site Proton acceptor is the Asp-38. The active site involves Lys-147. Cys-180 (nucleophile) is an active-site residue.

It belongs to the isochorismatase family. RutB subfamily.

It carries out the reaction (Z)-3-ureidoacrylate + H2O + H(+) = (Z)-3-aminoacrylate + NH4(+) + CO2. The enzyme catalyses (Z)-3-ureidoacrylate + H2O = (Z)-3-aminoacrylate + carbamate + H(+). It catalyses the reaction (Z)-2-methylureidoacrylate + H2O + H(+) = (Z)-2-methylaminoacrylate + NH4(+) + CO2. Its function is as follows. Hydrolyzes ureidoacrylate to form aminoacrylate and carbamate. The carbamate hydrolyzes spontaneously, thereby releasing one of the nitrogen atoms of the pyrimidine ring as ammonia and one of its carbon atoms as CO2. The sequence is that of Ureidoacrylate amidohydrolase RutB from Shigella flexneri serotype X (strain 2002017).